Here is a 302-residue protein sequence, read N- to C-terminus: Diacetylchitobiose uptake system permease protein NgcG (302 aa).

Helical transmembrane passes span 40–60, 99–119, 131–151, 166–186, 221–241, and 268–288; these read LLIL…MSSF, VIVV…CAYV, IYYV…VPLF, LILT…YSFF, AAVA…PVAL, and GALF…YCVF. One can recognise an ABC transmembrane type-1 domain in the interval 95–288; that stretch reads FLNSVIVVVS…VPVLLVYCVF (194 aa).

The protein belongs to the binding-protein-dependent transport system permease family. In terms of assembly, the complex is composed of two ATP-binding proteins (MsiK), two transmembrane proteins (NgcF and NgcG) and a solute-binding protein (NgcE).

Its subcellular location is the cell membrane. Part of the ABC transporter complex NgcEFG-MsiK involved in N,N'-diacetylchitobiose ((GlcNAc)2) uptake. Responsible for the translocation of the substrate across the membrane. The chain is Diacetylchitobiose uptake system permease protein NgcG from Streptomyces coelicolor (strain ATCC BAA-471 / A3(2) / M145).